Consider the following 63-residue polypeptide: Conotoxin PnMRCL-0111 (63 aa).

The first 19 residues, 1–19 (MRCLPVFIVLLLLIVSAPG), serve as a signal peptide directing secretion. Positions 20–49 (FDARPKTEDDVPLSSFHDDLQRTVRTLLDI) are excised as a propeptide. At Trp62 the chain carries Tryptophan amide.

The protein belongs to the conotoxin T superfamily. Contains 2 disulfide bonds that can be either 'C1-C3, C2-C4' or 'C1-C4, C2-C3', since these disulfide connectivities have been observed for conotoxins with cysteine framework V (for examples, see AC P0DQQ7 and AC P81755). As to expression, expressed by the venom duct.

The protein resides in the secreted. The protein is Conotoxin PnMRCL-0111 of Conus pennaceus (Feathered cone).